Here is a 348-residue protein sequence, read N- to C-terminus: Holliday junction branch migration complex subunit RuvB (348 aa).

A large ATPase domain (RuvB-L) region spans residues 4 to 184 (ADRLIAASGR…FGIVQRLEFY (181 aa)). ATP-binding positions include Ile-23, Arg-24, Gly-65, Lys-68, Thr-69, Thr-70, 131–133 (EDF), Arg-174, Tyr-184, and Arg-221. Thr-69 contacts Mg(2+). Positions 185–255 (NDKDLSTIVS…VADMALNLLD (71 aa)) are small ATPAse domain (RuvB-S). Positions 258-348 (ERGFDHSDRR…GGDFSGPGDE (91 aa)) are head domain (RuvB-H). DNA-binding residues include Arg-294, Arg-313, and Arg-318.

This sequence belongs to the RuvB family. Homohexamer. Forms an RuvA(8)-RuvB(12)-Holliday junction (HJ) complex. HJ DNA is sandwiched between 2 RuvA tetramers; dsDNA enters through RuvA and exits via RuvB. An RuvB hexamer assembles on each DNA strand where it exits the tetramer. Each RuvB hexamer is contacted by two RuvA subunits (via domain III) on 2 adjacent RuvB subunits; this complex drives branch migration. In the full resolvosome a probable DNA-RuvA(4)-RuvB(12)-RuvC(2) complex forms which resolves the HJ.

Its subcellular location is the cytoplasm. It carries out the reaction ATP + H2O = ADP + phosphate + H(+). The RuvA-RuvB-RuvC complex processes Holliday junction (HJ) DNA during genetic recombination and DNA repair, while the RuvA-RuvB complex plays an important role in the rescue of blocked DNA replication forks via replication fork reversal (RFR). RuvA specifically binds to HJ cruciform DNA, conferring on it an open structure. The RuvB hexamer acts as an ATP-dependent pump, pulling dsDNA into and through the RuvAB complex. RuvB forms 2 homohexamers on either side of HJ DNA bound by 1 or 2 RuvA tetramers; 4 subunits per hexamer contact DNA at a time. Coordinated motions by a converter formed by DNA-disengaged RuvB subunits stimulates ATP hydrolysis and nucleotide exchange. Immobilization of the converter enables RuvB to convert the ATP-contained energy into a lever motion, pulling 2 nucleotides of DNA out of the RuvA tetramer per ATP hydrolyzed, thus driving DNA branch migration. The RuvB motors rotate together with the DNA substrate, which together with the progressing nucleotide cycle form the mechanistic basis for DNA recombination by continuous HJ branch migration. Branch migration allows RuvC to scan DNA until it finds its consensus sequence, where it cleaves and resolves cruciform DNA. The protein is Holliday junction branch migration complex subunit RuvB of Pseudomonas putida (strain ATCC 700007 / DSM 6899 / JCM 31910 / BCRC 17059 / LMG 24140 / F1).